We begin with the raw amino-acid sequence, 83 residues long: Small ribosomal subunit protein eS21 (83 aa).

Belongs to the eukaryotic ribosomal protein eS21 family. As to quaternary structure, component of the 40S small ribosomal subunit.

The protein localises to the cytoplasm. It is found in the cytosol. The protein resides in the rough endoplasmic reticulum. In terms of biological role, component of the small ribosomal subunit. The ribosome is a large ribonucleoprotein complex responsible for the synthesis of proteins in the cell. The protein is Small ribosomal subunit protein eS21 (rps21) of Xenopus tropicalis (Western clawed frog).